Reading from the N-terminus, the 462-residue chain is 23S rRNA (uracil(1939)-C(5))-methyltransferase RlmD (462 aa).

Positions 6–76 (KSRKPQQPEY…KRLEEAEMVE (71 aa)) constitute a TRAM domain. [4Fe-4S] cluster-binding residues include C90, C96, C99, and C178. Residues Q287, F316, N321, E340, D367, and D388 each contribute to the S-adenosyl-L-methionine site. The Nucleophile role is filled by C414.

It belongs to the class I-like SAM-binding methyltransferase superfamily. RNA M5U methyltransferase family. RlmD subfamily.

The enzyme catalyses uridine(1939) in 23S rRNA + S-adenosyl-L-methionine = 5-methyluridine(1939) in 23S rRNA + S-adenosyl-L-homocysteine + H(+). Functionally, catalyzes the formation of 5-methyl-uridine at position 1939 (m5U1939) in 23S rRNA. The chain is 23S rRNA (uracil(1939)-C(5))-methyltransferase RlmD from Acinetobacter baumannii (strain AB0057).